The sequence spans 331 residues: Coiled-coil domain-containing protein 92 (331 aa).

Coiled coils occupy residues 18 to 44 and 76 to 152; these read MAAT…HAST and DGTS…EQRA. Residues 171–184 are compositionally biased toward low complexity; that stretch reads SSSGTSDASPSGSP. A disordered region spans residues 171–212; the sequence is SSSGTSDASPSGSPVLASYKPAPPKDKLPETPRRRMKKSLSA. The span at 193-203 shows a compositional bias: basic and acidic residues; that stretch reads PPKDKLPETPR. The residue at position 209 (Ser-209) is a Phosphoserine.

Interacts with CEP164. In terms of assembly, (Microbial infection) Interacts with ebolavirus protein NP; this interaction sequesters NP in the cytoplasm. Phosphorylated at Ser-209 by TTBK2.

It localises to the cytoplasm. It is found in the cytoskeleton. The protein localises to the microtubule organizing center. The protein resides in the centrosome. Its subcellular location is the centriole. Functionally, interferon-stimulated protein that plays a role in innate immunity. Strongly inhibits ebolavirus transcription and replication. Forms a complex with viral RNA-bound nucleocapsid NP and thereby prevents the transport of NP to the cell surface. In Homo sapiens (Human), this protein is Coiled-coil domain-containing protein 92 (CCDC92).